Reading from the N-terminus, the 1025-residue chain is Retrovirus-related Pol polyprotein from type-1 retrotransposable element R2 (1025 aa).

Positions 1–11 (NQIKKSNTSTG) are enriched in polar residues. The disordered stretch occupies residues 1–38 (NQIKKSNTSTGARIPKAMTNPADNFAGGQWKPPGRRSA). A C2H2-type zinc finger spans residues 46-69 (FVCEHCLRAFTTNTGRGLHIKRAH). The span at 146-158 (NRARETELTRLET) shows a compositional bias: basic and acidic residues. The disordered stretch occupies residues 146–172 (NRARETELTRLETADEDPASQEQDNPN). A Reverse transcriptase domain is found at 358–635 (MIMYHGQCPR…DQWKYLGVVY (278 aa)). Residues 755-1025 (SLLGGDWVAE…YRTERRRTAN (271 aa)) are nucleic acid-binding endonuclease.

The enzyme catalyses DNA(n) + a 2'-deoxyribonucleoside 5'-triphosphate = DNA(n+1) + diphosphate. In Nasonia vitripennis (Parasitic wasp), this protein is Retrovirus-related Pol polyprotein from type-1 retrotransposable element R2.